Reading from the N-terminus, the 2055-residue chain is Citron rho-interacting kinase (2055 aa).

In terms of domain architecture, Protein kinase spans 97-359 (FEVRSLVGCG…FEGLCCHPFF (263 aa)). ATP is bound by residues 103 to 111 (VGCGHFAEV) and Lys-126. Asp-221 serves as the catalytic Proton acceptor. Residues 360-430 (ARTDWNNIRN…SKALGYLGRS (71 aa)) form the AGC-kinase C-terminal domain. The segment at 375–398 (VPTLKSDDDTSNFDEPEKNSWVSS) is disordered. Coiled-coil stretches lie at residues 457–747 (LQDS…AQVS), 773–1238 (IKKD…LEYQ), and 1284–1318 (YNELKLALEKEKARCAELEEALQKTRIELRSAREE). The segment at 1349–1376 (PEHQPSAMSLLAPPSSRRKEASTPEEFS) is disordered. A compositionally biased stretch (low complexity) spans 1353-1363 (PSAMSLLAPPS). The segment covering 1365–1376 (RRKEASTPEEFS) has biased composition (basic and acidic residues). Residues 1388–1437 (PHRFNVGLNMRATKCAVCLDTVHFGRQASKCLECQVMCHPKCSTCLPATC) form a Phorbol-ester/DAG-type zinc finger. Positions 1469-1589 (SLHLEGWMKV…WVTALESVVA (121 aa)) constitute a PH domain. In terms of domain architecture, CNH spans 1617 to 1907 (RLDMNCTLPF…RYLGPAISSG (291 aa)). Positions 1932–2040 (SGTEQHRVPS…RGRLPAGAVR (109 aa)) are disordered. Over residues 1939–1948 (VPSTSRSSPN) the composition is skewed to polar residues. Positions 1974 to 2031 (SHPREPSTPHRYRDREGRTELRRDKSPGRPLEREKSPGRMLSTRRERSPGRLFEDSSR) are enriched in basic and acidic residues.

The protein belongs to the protein kinase superfamily. AGC Ser/Thr protein kinase family. Homodimer. Directly interacts with KIF14 depending on the activation state (stronger interaction with the kinase-dead form). Interacts with TTC3.

Its subcellular location is the cytoplasm. It catalyses the reaction L-seryl-[protein] + ATP = O-phospho-L-seryl-[protein] + ADP + H(+). It carries out the reaction L-threonyl-[protein] + ATP = O-phospho-L-threonyl-[protein] + ADP + H(+). In terms of biological role, plays a role in cytokinesis. Required for KIF14 localization to the central spindle and midbody. Putative RHO/RAC effector that binds to the GTP-bound forms of RHO and RAC1. It probably binds p21 with a tighter specificity in vivo. Displays serine/threonine protein kinase activity. Plays an important role in the regulation of cytokinesis and the development of the central nervous system. Phosphorylates MYL9/MLC2. The polypeptide is Citron rho-interacting kinase (Rattus norvegicus (Rat)).